The primary structure comprises 131 residues: Profilin (131 aa).

It belongs to the profilin family. In terms of assembly, occurs in many kinds of cells as a complex with monomeric actin in a 1:1 ratio.

The protein resides in the cytoplasm. It is found in the cytoskeleton. Its function is as follows. Binds to actin and affects the structure of the cytoskeleton. At high concentrations, profilin prevents the polymerization of actin, whereas it enhances it at low concentrations. By binding to PIP2, it inhibits the formation of IP3 and DG. The sequence is that of Profilin from Arachis hypogaea (Peanut).